The sequence spans 87 residues: Beta-toxin Cn4 (87 aa).

The N-terminal stretch at 1-19 (MNSLLMITACLALVGTVWA) is a signal peptide. In terms of domain architecture, LCN-type CS-alpha/beta spans 20-85 (KEGYLVNSYT…VWPLKNKTCN (66 aa)). 4 cysteine pairs are disulfide-bonded: C31–C84, C35–C60, C44–C65, and C48–C67. N85 carries the post-translational modification Asparagine amide.

This sequence belongs to the long (4 C-C) scorpion toxin superfamily. Sodium channel inhibitor family. Beta subfamily. Expressed by the venom gland.

It is found in the secreted. Its function is as follows. Beta toxins bind voltage-independently at site-4 of sodium channels (Nav) and shift the voltage of activation toward more negative potentials thereby affecting sodium channel activation and promoting spontaneous and repetitive firing. This toxin affects the activation mechanism of sodium channels of squid axon. It also competes with Cn2 in rat brain synaptosomes. Is lethal to mice. The sequence is that of Beta-toxin Cn4 from Centruroides noxius (Mexican scorpion).